Consider the following 81-residue polypeptide: UPF0180 protein ABC2430 (81 aa).

This sequence belongs to the UPF0180 family.

The sequence is that of UPF0180 protein ABC2430 from Shouchella clausii (strain KSM-K16) (Alkalihalobacillus clausii).